We begin with the raw amino-acid sequence, 35 residues long: Peptide ToHyp2 (35 aa).

Pro residues predominate over residues 1–29 (LPKPPLLPPPVPGLAPGLPPLPVPDPVPH). Positions 1–35 (LPKPPLLPPPVPGLAPGLPPLPVPDPVPHPPKKPP) are disordered. Hydroxyproline is present on residues P5, P9, P10, P12, P16, P20, P31, and P35.

In terms of processing, O-glycosylated; contains pentose side chains at some or all of the hydroxyproline residues. Glycosylation is required for full antifungal activity.

Antimicrobial peptide. Inhibits elongation of hyphae in B.sorokiniana (IC(50)=3.8 uM) but has no effect on this process or on germination of conidia in a panel of other phytopathogenic fungi. At concentrations above 10 uM, has antibacterial activity. This is Peptide ToHyp2 from Taraxacum officinale (Common dandelion).